The following is a 213-amino-acid chain: MSSVKLFKDLLGNTETVELKNKKLFISDKKINHQEIFNSVLVEEANSRQSTASTLTKAEVRGGGRKPYKQKHTGRARQGSIRNPHYVGGGRAFGPSPEKNYTLKQNSKAYKLAFQSAMTLKLNEQGLNLLVNKIDMKEPSTKTISKMLKKVSYENKKVLFVINDKNENFLKSCKNIQKVTSKMWNQVSVRDILNSDIAVIQEDAFDKISEVFA.

The interval 51–90 (TASTLTKAEVRGGGRKPYKQKHTGRARQGSIRNPHYVGGG) is disordered. A compositionally biased stretch (basic residues) spans 63–75 (GGRKPYKQKHTGR).

The protein belongs to the universal ribosomal protein uL4 family. As to quaternary structure, part of the 50S ribosomal subunit.

In terms of biological role, one of the primary rRNA binding proteins, this protein initially binds near the 5'-end of the 23S rRNA. It is important during the early stages of 50S assembly. It makes multiple contacts with different domains of the 23S rRNA in the assembled 50S subunit and ribosome. Functionally, forms part of the polypeptide exit tunnel. In Malacoplasma penetrans (strain HF-2) (Mycoplasma penetrans), this protein is Large ribosomal subunit protein uL4.